The primary structure comprises 341 residues: UDP-3-O-acylglucosamine N-acyltransferase (341 aa).

H239 functions as the Proton acceptor in the catalytic mechanism.

The protein belongs to the transferase hexapeptide repeat family. LpxD subfamily. In terms of assembly, homotrimer.

The enzyme catalyses a UDP-3-O-[(3R)-3-hydroxyacyl]-alpha-D-glucosamine + a (3R)-hydroxyacyl-[ACP] = a UDP-2-N,3-O-bis[(3R)-3-hydroxyacyl]-alpha-D-glucosamine + holo-[ACP] + H(+). It functions in the pathway bacterial outer membrane biogenesis; LPS lipid A biosynthesis. In terms of biological role, catalyzes the N-acylation of UDP-3-O-acylglucosamine using 3-hydroxyacyl-ACP as the acyl donor. Is involved in the biosynthesis of lipid A, a phosphorylated glycolipid that anchors the lipopolysaccharide to the outer membrane of the cell. This Photobacterium profundum (strain SS9) protein is UDP-3-O-acylglucosamine N-acyltransferase.